Here is a 475-residue protein sequence, read N- to C-terminus: MLRIAILGRPNVGKSSLFNRMCKQSLAIVNSQEGTTRDRLYGEIRGWSVPVQVIDTGGVDKDSEDHFQKHIYKQALAGAGEADILLLVIDIRCGITEQDAAIAKQLLPLKKPLILVANKADTLKDEHHVHELYKIGISEILTVSASHDKHIDRLLQKIKTLANIPEIAEEPVEEIEEEAQISSHEILSPEESLSDYEEEEILFSKPPASDKPLKIALIGRPNVGKSSIINGLLNEERCIIDNIPGTTRDNVDILYSHNDRSYLFIDTAGLRKMKSVKNSIEWISSSRTEKAIARADICLLVIDATHCLSSYDKRILSLISKHKKPHIILANKWDLIKGVRMEHYIRDLRSTDVYIGQSRILCISAAKKRNLRHIFSSIDELHETVSRKVPTPVVNKTLASALQKHHPQVINGRRLRIYYAIHKTATPFQFLLFINAKSLLTKHYECYLKNTLKTSFNLYGIPFDLEIKEKAKRTN.

2 consecutive EngA-type G domains span residues 2 to 166 (LRIA…NIPE) and 213 to 386 (LKIA…ETVS). Residues 8 to 15 (GRPNVGKS), 55 to 59 (DTGGV), 118 to 121 (NKAD), 219 to 226 (GRPNVGKS), 266 to 270 (DTAGL), and 331 to 334 (NKWD) each bind GTP. A KH-like domain is found at 387 to 471 (RKVPTPVVNK…PFDLEIKEKA (85 aa)).

It belongs to the TRAFAC class TrmE-Era-EngA-EngB-Septin-like GTPase superfamily. EngA (Der) GTPase family. As to quaternary structure, associates with the 50S ribosomal subunit.

GTPase that plays an essential role in the late steps of ribosome biogenesis. This is GTPase Der from Chlamydia felis (strain Fe/C-56) (Chlamydophila felis).